We begin with the raw amino-acid sequence, 118 residues long: Ribonuclease P protein component (118 aa).

It belongs to the RnpA family. In terms of assembly, consists of a catalytic RNA component (M1 or rnpB) and a protein subunit.

The catalysed reaction is Endonucleolytic cleavage of RNA, removing 5'-extranucleotides from tRNA precursor.. Functionally, RNaseP catalyzes the removal of the 5'-leader sequence from pre-tRNA to produce the mature 5'-terminus. It can also cleave other RNA substrates such as 4.5S RNA. The protein component plays an auxiliary but essential role in vivo by binding to the 5'-leader sequence and broadening the substrate specificity of the ribozyme. In Enterococcus faecalis (strain ATCC 700802 / V583), this protein is Ribonuclease P protein component.